Reading from the N-terminus, the 120-residue chain is U-scoloptoxin(20)-Cw1a (120 aa).

An N-terminal signal peptide occupies residues 1–26 (MNSTDRLLGVLLAVVALILLIRISEA). A disordered region spans residues 87 to 106 (SSGKSLTTTKDSSESRKKEI). Basic and acidic residues predominate over residues 97-106 (DSSESRKKEI).

It belongs to the scoloptoxin-20 family. In terms of processing, contains 3 disulfide bonds. As to expression, expressed by the venom gland.

The protein resides in the secreted. The protein is U-scoloptoxin(20)-Cw1a of Cormocephalus westwoodi (Westwood's green centipede).